We begin with the raw amino-acid sequence, 1097 residues long: Kinesin-like protein KIF1C (1097 aa).

The 343-residue stretch at 5 to 347 (SVKVAVRVRP…LRYADRTKQI (343 aa)) folds into the Kinesin motor domain. 96–103 (GQTGAGKS) provides a ligand contact to ATP. Serine 294 is subject to Phosphoserine. A coiled-coil region spans residues 358 to 380 (NARLIRELQEEVARLRELLMAQG). The interval 397–434 (GGVLPAASSPPAPASPSSPPPHNGELEPSFSPSAEPQI) is disordered. Over residues 404–418 (SSPPAPASPSSPPPH) the composition is skewed to pro residues. The stretch at 437–478 (EEAMERLQETEKIIAELNETWEEKLRKTEALRMEREALLAEM) forms a coiled coil. Phosphoserine is present on serine 491. The FHA domain maps to 520–587 (TRVGQVDVDI…LKSGNRIVMG (68 aa)). Positions 630-671 (EQQGIDIKLEMEKRLQDLENQYRKEKEEADLLLEQQRLYADS) form a coiled coil. Serine 671 and serine 673 each carry phosphoserine. Residues 824–868 (AEVEDLRAHIDKLTGILQEVKLQNSSKDRELQALRDRMLRMERVI) adopt a coiled-coil conformation. 2 disordered regions span residues 897-921 (EAVS…ERVS) and 946-1097 (QGLQ…GAAV). The residue at position 911 (serine 911) is a Phosphoserine. A compositionally biased stretch (gly residues) spans 949 to 958 (QGSGGRGGGL). Pro residues predominate over residues 997–1015 (GPQPPEEVTAPPPPPNRRP). Basic residues predominate over residues 1016-1026 (PSPRRPHRPRR). Serine 1028 carries the post-translational modification Phosphoserine. An Omega-N-methylarginine modification is found at arginine 1036. Residues 1059–1077 (QPQPYPAQRPGPRYPPYTT) show a composition bias toward pro residues. Threonine 1077 carries the post-translational modification Phosphothreonine. The residue at position 1086 (serine 1086) is a Phosphoserine. Basic and acidic residues predominate over residues 1086-1097 (SAPDLKESGAAV).

This sequence belongs to the TRAFAC class myosin-kinesin ATPase superfamily. Kinesin family. Unc-104 subfamily.

It localises to the cytoplasm. It is found in the cytoskeleton. Functionally, probable motor protein. This chain is Kinesin-like protein KIF1C (Kif1c), found in Rattus norvegicus (Rat).